The chain runs to 190 residues: dCTP deaminase (190 aa).

Residue 113–118 (KSTYAR) participates in dCTP binding. Glu139 functions as the Proton donor/acceptor in the catalytic mechanism. DCTP contacts are provided by Gln158, Tyr172, Lys181, and Gln182.

Belongs to the dCTP deaminase family. As to quaternary structure, homotrimer.

It carries out the reaction dCTP + H2O + H(+) = dUTP + NH4(+). The protein operates within pyrimidine metabolism; dUMP biosynthesis; dUMP from dCTP (dUTP route): step 1/2. Its function is as follows. Catalyzes the deamination of dCTP to dUTP. The chain is dCTP deaminase from Chlamydia trachomatis serovar A (strain ATCC VR-571B / DSM 19440 / HAR-13).